The chain runs to 269 residues: Mitochondrial genome maintenance protein MGM101 (269 aa).

A mitochondrion-targeting transit peptide spans Met1–Asn30.

Belongs to the MGM101 family.

Its subcellular location is the mitochondrion matrix. It is found in the mitochondrion nucleoid. Performs an essential function in the repair of oxidatively damaged mtDNA that is required for the maintenance of the mitochondrial genome. Binds to DNA. The protein is Mitochondrial genome maintenance protein MGM101 (MGM101) of Saccharomyces cerevisiae (strain ATCC 204508 / S288c) (Baker's yeast).